The following is a 368-amino-acid chain: 3-isopropylmalate dehydrogenase (368 aa).

80–93 provides a ligand contact to NAD(+); the sequence is GPKWDNLEFSKKPE. Substrate is bound by residues Arg100, Arg110, Arg138, and Asp229. Mg(2+) is bound by residues Asp229, Asp253, and Asp257. Residue 292–304 coordinates NAD(+); that stretch reads GSAPDIAGKEIAN.

It belongs to the isocitrate and isopropylmalate dehydrogenases family. LeuB type 1 subfamily. Homodimer. It depends on Mg(2+) as a cofactor. Requires Mn(2+) as cofactor.

It localises to the cytoplasm. It carries out the reaction (2R,3S)-3-isopropylmalate + NAD(+) = 4-methyl-2-oxopentanoate + CO2 + NADH. It functions in the pathway amino-acid biosynthesis; L-leucine biosynthesis; L-leucine from 3-methyl-2-oxobutanoate: step 3/4. Catalyzes the oxidation of 3-carboxy-2-hydroxy-4-methylpentanoate (3-isopropylmalate) to 3-carboxy-4-methyl-2-oxopentanoate. The product decarboxylates to 4-methyl-2 oxopentanoate. This is 3-isopropylmalate dehydrogenase from Pelagibacter ubique (strain HTCC1062).